The following is a 74-amino-acid chain: U12-theraphotoxin-Hs1a (74 aa).

An N-terminal signal peptide occupies residues 1-20 (MNVKILLLLVGLNLVMHSNA). Positions 21–40 (TGDSETNPAETLFIEEIFRR) are excised as a propeptide. 3 cysteine pairs are disulfide-bonded: C42–C56, C49–C61, and C55–C71.

It belongs to the neurotoxin 35 family. As to expression, expressed by the venom gland.

It localises to the secreted. Functionally, putative ion channel inhibitor. This is U12-theraphotoxin-Hs1a from Cyriopagopus schmidti (Chinese bird spider).